We begin with the raw amino-acid sequence, 249 residues long: Putative S-adenosyl-L-methionine-dependent methyltransferase Mjls_0570 (249 aa).

Residues Asp111 and 141 to 142 (DL) each bind S-adenosyl-L-methionine.

It belongs to the UPF0677 family.

Functionally, exhibits S-adenosyl-L-methionine-dependent methyltransferase activity. The polypeptide is Putative S-adenosyl-L-methionine-dependent methyltransferase Mjls_0570 (Mycobacterium sp. (strain JLS)).